A 944-amino-acid chain; its full sequence is uncharacterized protein (944 aa).

This is an uncharacterized protein from Ureaplasma parvum serovar 3 (strain ATCC 700970).